We begin with the raw amino-acid sequence, 130 residues long: Small ribosomal subunit protein uS8 (130 aa).

This sequence belongs to the universal ribosomal protein uS8 family. As to quaternary structure, part of the 30S ribosomal subunit.

In terms of biological role, one of the primary rRNA binding proteins, it binds directly to 16S rRNA central domain where it helps coordinate assembly of the platform of the 30S subunit. This is Small ribosomal subunit protein uS8 from Methanoculleus marisnigri (strain ATCC 35101 / DSM 1498 / JR1).